The sequence spans 179 residues: Large ribosomal subunit protein uL22c (179 aa).

The protein belongs to the universal ribosomal protein uL22 family. As to quaternary structure, part of the 50S ribosomal subunit.

The protein localises to the plastid. It is found in the chloroplast. Its function is as follows. This protein binds specifically to 23S rRNA. In terms of biological role, the globular domain of the protein is located near the polypeptide exit tunnel on the outside of the subunit, while an extended beta-hairpin is found that lines the wall of the exit tunnel in the center of the 70S ribosome. The polypeptide is Large ribosomal subunit protein uL22c (rpl22) (Ranunculus macranthus (Large buttercup)).